The chain runs to 529 residues: uncharacterized protein (529 aa).

The Radical SAM core domain maps to 157-410 (DFPHIICEIE…FKNRVRENID (254 aa)). 3 residues coordinate [4Fe-4S] cluster: Cys171, Cys176, and Cys179.

[4Fe-4S] cluster is required as a cofactor.

This is an uncharacterized protein from Archaeoglobus fulgidus (strain ATCC 49558 / DSM 4304 / JCM 9628 / NBRC 100126 / VC-16).